Consider the following 2036-residue polypeptide: Bikaverin polyketide synthase bik1 (2036 aa).

An N-terminal acylcarrier protein transacylase domain (SAT) region spans residues 8–242; it reads YVFGDQSTPV…YPAPIYGPYH (235 aa). The 432-residue stretch at 370–801 folds into the Ketosynthase family 3 (KS3) domain; the sequence is ENKIAIIGFS…GGNTSLLLED (432 aa). Residues Cys-541, His-676, and His-718 each act as for beta-ketoacyl synthase activity in the active site. Residues 908–1209 are acyl/malonyl transferases; sequence FLFTGQGAQE…LASLRRKEDH (302 aa). Catalysis depends on Ser-997, which acts as the For acyl/malonyl transferase activity. An N-terminal hotdog fold region spans residues 1293-1425; it reads HNVIEQVHGD…CDVAVENPSS (133 aa). One can recognise a PKS/mFAS DH domain in the interval 1293–1600; that stretch reads HNVIEQVHGD…FKKVARKVLE (308 aa). The tract at residues 1295-1599 is product template (PT) domain; sequence VIEQVHGDKR…TFKKVARKVL (305 aa). The active-site Proton acceptor; for dehydratase activity is the His-1325. A C-terminal hotdog fold region spans residues 1452-1600; sequence SAHMMRRGLL…FKKVARKVLE (149 aa). Asp-1511 acts as the Proton donor; for dehydratase activity in catalysis. Residues 1628–1654 form a disordered region; it reads VLTPPSTTSHSVGTTSPPEPTESPVGS. Positions 1638–1654 are enriched in low complexity; it reads SVGTTSPPEPTESPVGS. The Carrier domain maps to 1653–1730; sequence GSASGLIQKA…DLKSFLGAND (78 aa). Ser-1690 carries the O-(pantetheine 4'-phosphoryl)serine modification. Residues 1733 to 1758 form a disordered region; sequence FSSSNSEAESSASSAASTSPSDHGDD. Low complexity predominate over residues 1734-1753; that stretch reads SSSNSEAESSASSAASTSPS. The active-site For thioesterase activity is Ser-1857.

It functions in the pathway secondary metabolite biosynthesis. In terms of biological role, polyketide synthase; part of the gene cluster that mediates the biosynthesis of bikaverin, a red pigment also considered as a mycotoxin. The first stage is catalyzed by the polyketide synthase bik1, which catalyzes the formation of the intermediate SMA76a also knowm as pre-bikaverin. FAD-dependent monooxygenase bik2 might then be responsible for the oxidation of pre-bikaverin to oxo-pre-bikaverin which is in turn methylated by the O-methyltransferase bik3 to me-oxo-pre-bikaverin. A further cycle of oxydation and methylation by bik2 and bik3 leads to the final product of bikaverin, via a nor-bikaverin intermediate. This chain is Bikaverin polyketide synthase bik1, found in Gibberella fujikuroi (strain CBS 195.34 / IMI 58289 / NRRL A-6831) (Bakanae and foot rot disease fungus).